The following is a 749-amino-acid chain: Protein phosphatase 1E (749 aa).

Residues 21–128 are disordered; it reads EFRGPCGGGE…PPLPPLPRPL (108 aa). 3 consecutive repeat copies span residues 31 to 32, 33 to 34, and 35 to 36. Positions 31 to 44 are 7 X 2 AA tandem repeats of P-E; the sequence is PEPEPESEPEPEPE. A compositionally biased stretch (acidic residues) spans 31 to 45; it reads PEPEPESEPEPEPEA. A 4; approximate repeat occupies 37-38; it reads SE. 3 consecutive repeat copies span residues 39-40, 41-42, and 43-44. Residues 46 to 55 are compositionally biased toward low complexity; the sequence is ELVAAEAAEA. Residues 69–102 show a composition bias toward acidic residues; sequence ATEEGEQDQDPEPEDEAVEEETATEGEEEEEEEA. Residues 110–126 show a composition bias toward pro residues; the sequence is VPPPPQPQLPPLPPLPR. In terms of domain architecture, PPM-type phosphatase spans 224-485; the sequence is QIYYETSIHA…DNITVIVVFL (262 aa). Aspartate 270, glycine 271, aspartate 432, and aspartate 476 together coordinate Mn(2+). The segment at 495-537 is disordered; that stretch reads SEESEWTENSFQGGQEDGGDDKETHGECKRPWPQHQCSAPADL. The span at 515-524 shows a compositional bias: basic and acidic residues; sequence DKETHGECKR. 2 positions are modified to phosphoserine: serine 532 and serine 545. The interval 608 to 627 is disordered; that stretch reads VKSSLPERSGAGEPRVSFNL.

Belongs to the PP2C family. In terms of assembly, heterotrimer. Interacts with PAX1 and ARHGEF6 (or ARHGEF7). Mg(2+) serves as cofactor. It depends on Mn(2+) as a cofactor.

The protein resides in the nucleus. It is found in the cytoplasm. It carries out the reaction O-phospho-L-seryl-[protein] + H2O = L-seryl-[protein] + phosphate. It catalyses the reaction O-phospho-L-threonyl-[protein] + H2O = L-threonyl-[protein] + phosphate. Functionally, protein phosphatase that inactivates multifunctional CaM kinases such as CAMK4 and CAMK2. Dephosphorylates and inactivates PAK. May play a role in the inhibition of actin fiber stress breakdown and in morphological changes driven by TNK2/CDC42. Dephosphorylates PRKAA2. This is Protein phosphatase 1E (Ppm1e) from Mus musculus (Mouse).